The following is a 322-amino-acid chain: UV DNA damage endonuclease (322 aa).

The protein belongs to the uve1/UvsE family.

Its function is as follows. Component in a DNA repair pathway. Removal of UV LIGHT damaged nucleotides. Recognizes pyrimidine dimers and cleave a phosphodiester bond immediately 5' to the lesion. This chain is UV DNA damage endonuclease, found in Nostoc sp. (strain PCC 7120 / SAG 25.82 / UTEX 2576).